Here is a 227-residue protein sequence, read N- to C-terminus: Ion-translocating oxidoreductase complex subunit E (227 aa).

Helical transmembrane passes span 34-56 (AINA…TIIS), 68-88 (IPIY…LLHA), 91-111 (FNLY…CIIV), 127-147 (FFDG…VGSI), and 181-201 (TIIL…LIAI).

It belongs to the NqrDE/RnfAE family. As to quaternary structure, the complex is composed of six subunits: RnfA, RnfB, RnfC, RnfD, RnfE and RnfG.

The protein localises to the cell inner membrane. Functionally, part of a membrane-bound complex that couples electron transfer with translocation of ions across the membrane. In Buchnera aphidicola subsp. Acyrthosiphon pisum (strain APS) (Acyrthosiphon pisum symbiotic bacterium), this protein is Ion-translocating oxidoreductase complex subunit E.